The following is an 88-amino-acid chain: Sec-independent protein translocase protein TatA (88 aa).

Residues 1-21 (MGGISITQLLIIASIVVVLFG) form a helical membrane-spanning segment. The tract at residues 39 to 88 (FKKSMSEDDNTTSTSSDKSSQDADFTAPPIEPKANLACPDEAKNKDKEHV) is disordered. The segment covering 49 to 62 (TTSTSSDKSSQDAD) has biased composition (low complexity). The span at 78 to 88 (DEAKNKDKEHV) shows a compositional bias: basic and acidic residues.

It belongs to the TatA/E family. As to quaternary structure, the Tat system comprises two distinct complexes: a TatABC complex, containing multiple copies of TatA, TatB and TatC subunits, and a separate TatA complex, containing only TatA subunits. Substrates initially bind to the TatABC complex, which probably triggers association of the separate TatA complex to form the active translocon.

Its subcellular location is the cell inner membrane. Part of the twin-arginine translocation (Tat) system that transports large folded proteins containing a characteristic twin-arginine motif in their signal peptide across membranes. TatA could form the protein-conducting channel of the Tat system. This is Sec-independent protein translocase protein TatA from Sodalis glossinidius (strain morsitans).